An 80-amino-acid polypeptide reads, in one-letter code: MTIFNTISSISNSTRTTSSSIATCNYNGSMANVNSTACFDNDFGEWGGLGGFNNGCGGGSNVNVINLDIDIGRRHHRRCC.

Belongs to the UPF0512 family.

This Dictyostelium discoideum (Social amoeba) protein is UPF0512 protein Q.